The sequence spans 576 residues: POU domain, class 6, transcription factor 1 (576 aa).

The interval 65-88 is disordered; the sequence is PAEAGSCDPDHSAEATVAARSPSE. The POU-specific domain maps to 414-488; sequence EDGINLEEIR…VLEKWLMEAE (75 aa). Residues 509-568 constitute a DNA-binding region (homeobox); sequence KRKRRTSFTPQAIEALNAYFEKNPLPTGQEITEIAKELNYDREVVRVWFCNRRQTLKNTS.

This sequence belongs to the POU transcription factor family. Class-6 subfamily. In terms of tissue distribution, isoform C1 and isoform C2 are found in the brain, while isoform C7 is found in the testis.

The protein localises to the nucleus. Functionally, transcription factor that binds preferentially to a variant of the octamer motif (5'-ATGATAAT-3'). This chain is POU domain, class 6, transcription factor 1 (Pou6f1), found in Mus musculus (Mouse).